Reading from the N-terminus, the 1018-residue chain is UPF0182 protein Francci3_3781 (1018 aa).

Helical transmembrane passes span 13 to 33 (TKVL…IAIF), 60 to 80 (ILLF…NIVL), 109 to 129 (MLLI…LSAA), 167 to 187 (FLLG…LLTH), 208 to 228 (AHIS…YYLD), 250 to 270 (AVLP…VLFI), and 283 to 303 (LGAG…PAIV). 2 stretches are compositionally biased toward low complexity: residues 886 to 896 (TTDAGQDGTPA) and 960 to 980 (SSPA…SVPA). 2 disordered regions span residues 886 to 920 (TTDA…AVGD) and 960 to 1018 (SSPA…PAPG). Residues 981 to 995 (SPVPASPAAKPPAPS) are compositionally biased toward pro residues.

This sequence belongs to the UPF0182 family.

The protein localises to the cell membrane. The polypeptide is UPF0182 protein Francci3_3781 (Frankia casuarinae (strain DSM 45818 / CECT 9043 / HFP020203 / CcI3)).